The following is a 260-amino-acid chain: Phosphatidylglycerol--prolipoprotein diacylglyceryl transferase (260 aa).

The next 3 helical transmembrane spans lie at 16 to 36, 55 to 75, and 87 to 107; these read LEFR…YFIV, VIFS…ILFY, and LFAV…VILA. Arg138 is an a 1,2-diacyl-sn-glycero-3-phospho-(1'-sn-glycerol) binding site. 2 helical membrane passes run 198-218 and 232-252; these read GVVF…VEFF and FSMG…MAVL.

This sequence belongs to the Lgt family.

Its subcellular location is the cell inner membrane. The enzyme catalyses L-cysteinyl-[prolipoprotein] + a 1,2-diacyl-sn-glycero-3-phospho-(1'-sn-glycerol) = an S-1,2-diacyl-sn-glyceryl-L-cysteinyl-[prolipoprotein] + sn-glycerol 1-phosphate + H(+). The protein operates within protein modification; lipoprotein biosynthesis (diacylglyceryl transfer). In terms of biological role, catalyzes the transfer of the diacylglyceryl group from phosphatidylglycerol to the sulfhydryl group of the N-terminal cysteine of a prolipoprotein, the first step in the formation of mature lipoproteins. In Geobacter sulfurreducens (strain ATCC 51573 / DSM 12127 / PCA), this protein is Phosphatidylglycerol--prolipoprotein diacylglyceryl transferase.